Here is a 208-residue protein sequence, read N- to C-terminus: MTIHYPNGNPYKDGTQFSSQAISRPTIYGGRGMTLEEELNISNQYYRSIDKAVVYKKPTPVQIVKVDYPKRSQAVIREAYFKTPSTTDYNGVYRGFYLDFEAKETKNKASFPLKNFHQHQIEHFRRCLKQSGICFVVIRFATLKRLFVFPAGRLIDCWDRQPDGGRKSIPLKDIVTNGFELHPQLQPVIPFLDGVDWLIETKVGNVRG.

Mg(2+) contacts are provided by Thr86, Asp88, Glu101, and Gln120.

It belongs to the RecU family. It depends on Mg(2+) as a cofactor.

It localises to the cytoplasm. The enzyme catalyses Endonucleolytic cleavage at a junction such as a reciprocal single-stranded crossover between two homologous DNA duplexes (Holliday junction).. In terms of biological role, endonuclease that resolves Holliday junction intermediates in genetic recombination. Cleaves mobile four-strand junctions by introducing symmetrical nicks in paired strands. Promotes annealing of linear ssDNA with homologous dsDNA. Required for DNA repair, homologous recombination and chromosome segregation. In Lacticaseibacillus casei (strain BL23) (Lactobacillus casei), this protein is Holliday junction resolvase RecU.